Reading from the N-terminus, the 315-residue chain is Cytochrome c biogenesis protein CcsA (315 aa).

Helical transmembrane passes span 15–35 (SCFL…GFGG), 39–59 (FSFT…LQLI), 73–93 (LYES…YIEV), 97–117 (TLFL…FTDF), 144–164 (VMIA…AYLV), 222–242 (TIGI…IWAN), 257–277 (WAFI…VGGW), and 283–303 (ALVA…VNLL).

This sequence belongs to the CcmF/CycK/Ccl1/NrfE/CcsA family. As to quaternary structure, may interact with Ccs1.

The protein localises to the plastid. It is found in the chloroplast thylakoid membrane. In terms of biological role, required during biogenesis of c-type cytochromes (cytochrome c6 and cytochrome f) at the step of heme attachment. The sequence is that of Cytochrome c biogenesis protein CcsA from Chlorella vulgaris (Green alga).